Reading from the N-terminus, the 113-residue chain is UPF0122 protein MCAP_0480 (113 aa).

Belongs to the UPF0122 family.

Its function is as follows. Might take part in the signal recognition particle (SRP) pathway. This is inferred from the conservation of its genetic proximity to ftsY/ffh. May be a regulatory protein. The chain is UPF0122 protein MCAP_0480 from Mycoplasma capricolum subsp. capricolum (strain California kid / ATCC 27343 / NCTC 10154).